A 581-amino-acid chain; its full sequence is Proline--tRNA ligase (581 aa).

It belongs to the class-II aminoacyl-tRNA synthetase family. ProS type 1 subfamily. As to quaternary structure, homodimer.

It localises to the cytoplasm. The catalysed reaction is tRNA(Pro) + L-proline + ATP = L-prolyl-tRNA(Pro) + AMP + diphosphate. Catalyzes the attachment of proline to tRNA(Pro) in a two-step reaction: proline is first activated by ATP to form Pro-AMP and then transferred to the acceptor end of tRNA(Pro). As ProRS can inadvertently accommodate and process non-cognate amino acids such as alanine and cysteine, to avoid such errors it has two additional distinct editing activities against alanine. One activity is designated as 'pretransfer' editing and involves the tRNA(Pro)-independent hydrolysis of activated Ala-AMP. The other activity is designated 'posttransfer' editing and involves deacylation of mischarged Ala-tRNA(Pro). The misacylated Cys-tRNA(Pro) is not edited by ProRS. The protein is Proline--tRNA ligase of Verminephrobacter eiseniae (strain EF01-2).